Here is a 72-residue protein sequence, read N- to C-terminus: Conotoxin VnMKLT2-011 (72 aa).

An N-terminal signal peptide occupies residues Met-1–Ala-23. Residues Glu-24–Arg-42 constitute a propeptide that is removed on maturation. Disulfide bonds link Cys-44/Cys-57, Cys-51/Cys-62, and Cys-56/Cys-71.

This sequence belongs to the conotoxin O1 superfamily. In terms of tissue distribution, expressed by the venom duct.

It localises to the secreted. The polypeptide is Conotoxin VnMKLT2-011 (Conus ventricosus (Mediterranean cone)).